We begin with the raw amino-acid sequence, 378 residues long: mRNA cap guanine-N(7) methyltransferase (378 aa).

Positions 24 to 331 constitute an mRNA cap 0 methyltransferase domain; sequence SRIFFMRNMN…MYLVFGFRKK (308 aa). MRNA is bound at residue 33 to 34; sequence NN. Positions 37, 62, 84, 116, 138, and 143 each coordinate S-adenosyl-L-methionine. 2 stretches are compositionally biased toward basic and acidic residues: residues 335 to 347 and 356 to 378; these read EKNLESEAPEIKK and DTDKTAEKNEERIEEKEENPSHC. The segment at 335 to 378 is disordered; it reads EKNLESEAPEIKKVTPVPLNEDTDKTAEKNEERIEEKEENPSHC.

The protein belongs to the class I-like SAM-binding methyltransferase superfamily. mRNA cap 0 methyltransferase family.

The protein localises to the nucleus. It catalyses the reaction a 5'-end (5'-triphosphoguanosine)-ribonucleoside in mRNA + S-adenosyl-L-methionine = a 5'-end (N(7)-methyl 5'-triphosphoguanosine)-ribonucleoside in mRNA + S-adenosyl-L-homocysteine. In terms of biological role, mRNA-capping methyltransferase that methylates the N7 position of the added guanosine to the 5'-cap structure of mRNAs. Binds RNA containing 5'-terminal GpppC. This chain is mRNA cap guanine-N(7) methyltransferase, found in Caenorhabditis briggsae.